A 552-amino-acid chain; its full sequence is TBCC domain-containing protein 1 (552 aa).

Residues 304-435 (PRLHRIVVMS…LEDHMARTGL (132 aa)) form the C-CAP/cofactor C-like domain.

This sequence belongs to the TBCC family. As to expression, expressed in brain and testis (at protein level).

It is found in the cytoplasm. The protein localises to the cytoskeleton. The protein resides in the microtubule organizing center. Its subcellular location is the centrosome. It localises to the spindle pole. In terms of biological role, plays a role in the regulation of centrosome and Golgi apparatus positioning, with consequences on cell shape and cell migration. This Mus musculus (Mouse) protein is TBCC domain-containing protein 1 (Tbccd1).